The sequence spans 65 residues: Large ribosomal subunit protein bL35 (65 aa).

This sequence belongs to the bacterial ribosomal protein bL35 family.

The polypeptide is Large ribosomal subunit protein bL35 (Chromobacterium violaceum (strain ATCC 12472 / DSM 30191 / JCM 1249 / CCUG 213 / NBRC 12614 / NCIMB 9131 / NCTC 9757 / MK)).